A 265-amino-acid polypeptide reads, in one-letter code: Probable aquaporin TIP3-2 (265 aa).

A run of 2 helical transmembrane segments spans residues 32 to 52 (LSEF…VYGL) and 62 to 82 (LGGL…AVAV). The NPA 1 motif lies at 92-94 (NPA). 3 consecutive transmembrane segments (helical) span residues 110–130 (AALY…LLRL), 151–171 (ALLL…ATAV), and 179–199 (DIAP…GGPF). The NPA 2 signature appears at 205 to 207 (NPA). A helical transmembrane segment spans residues 223–243 (WVYWLGPLIGAGMAGALYEFV).

The protein belongs to the MIP/aquaporin (TC 1.A.8) family. TIP (TC 1.A.8.10) subfamily. As to expression, expressed in leaves and at lower levels in roots.

It is found in the vacuole membrane. Aquaporins facilitate the transport of water and small neutral solutes across cell membranes. May be involved in transport from the vacuolar compartment to the cytoplasm. The chain is Probable aquaporin TIP3-2 (TIP3-2) from Oryza sativa subsp. japonica (Rice).